Here is a 174-residue protein sequence, read N- to C-terminus: uncharacterized protein (174 aa).

The protein belongs to the archaeal NMN adenylyltransferase family.

This is an uncharacterized protein from Archaeoglobus fulgidus (strain ATCC 49558 / DSM 4304 / JCM 9628 / NBRC 100126 / VC-16).